We begin with the raw amino-acid sequence, 60 residues long: Large ribosomal subunit protein bL33 (60 aa).

It belongs to the bacterial ribosomal protein bL33 family.

This is Large ribosomal subunit protein bL33 from Christiangramia forsetii (strain DSM 17595 / CGMCC 1.15422 / KT0803) (Gramella forsetii).